A 953-amino-acid polypeptide reads, in one-letter code: Probable LRR receptor-like serine/threonine-protein kinase At1g53420 (953 aa).

Residues 1–22 (MSLNRFLFTSFSFFLFFIVHFA) form the signal peptide. Residues 23-566 (SSATLPTQEG…SPRNGMSTGT (544 aa)) lie on the Extracellular side of the membrane. LRR repeat units lie at residues 63–86 (WSTI…LVGL), 88–110 (LLQE…WGVL), 111–132 (PLVN…EFGN), 135–158 (TLTS…GNLP), 159–182 (NIQQ…AKLT), and 183–205 (TLRD…IQKW). N-linked (GlcNAc...) asparagine glycosylation is found at asparagine 100 and asparagine 132. N-linked (GlcNAc...) asparagine glycosylation is found at asparagine 265, asparagine 315, asparagine 335, asparagine 378, and asparagine 423. The chain crosses the membrane as a helical span at residues 567–587 (LHTLVVILSIFIVFLVFGTLW). Topologically, residues 588 to 953 (KKGYLRSKSQ…SDRSESSADH (366 aa)) are cytoplasmic. In terms of domain architecture, Protein kinase spans 624–901 (FDSANRIGEG…VKMLEGKKMV (278 aa)). Residues 630-638 (IGEGGFGPV) and lysine 652 each bind ATP. Position 697 is a phosphotyrosine (tyrosine 697). Aspartate 750 functions as the Proton acceptor in the catalytic mechanism. Residue serine 783 is modified to Phosphoserine. A phosphothreonine mark is found at threonine 784 and threonine 789. Tyrosine 797 bears the Phosphotyrosine mark.

Belongs to the protein kinase superfamily. Ser/Thr protein kinase family.

The protein resides in the membrane. It catalyses the reaction L-seryl-[protein] + ATP = O-phospho-L-seryl-[protein] + ADP + H(+). It carries out the reaction L-threonyl-[protein] + ATP = O-phospho-L-threonyl-[protein] + ADP + H(+). The protein is Probable LRR receptor-like serine/threonine-protein kinase At1g53420 of Arabidopsis thaliana (Mouse-ear cress).